The sequence spans 620 residues: Extensin (620 aa).

The signal sequence occupies residues 1–20; the sequence is MKLSTLFALVLLLQSTAILS. Positions 34 to 45 are enriched in pro residues; sequence LPPPVTSQPPPS. The interval 34 to 620 is disordered; sequence LPPPVTSQPP…PPYGLLLSTP (587 aa). One copy of the H-A-P-P repeat lies at 70–73; it reads HAPP. Positions 106-129 are enriched in pro residues; the sequence is NPPPSPVISPSHPPPSYGAPPPSH. The segment covering 145 to 163 has biased composition (low complexity); it reads SHGHAPPSGGHTPPRGQHP. The H-A-P-P repeat unit spans residues 148–151; that stretch reads HAPP. Residues 164–177 are compositionally biased toward basic residues; the sequence is PSHRRPSPPSRHGH. A compositionally biased stretch (pro residues) spans 178 to 219; the sequence is PPPPTYAQPPPTPIYSPSPQVQPPPTYSPPPPTHVQPTPSPP. The interval 205–620 is contains the Ser-Pro(4) repeats; that stretch reads SPPPPTHVQP…PPYGLLLSTP (416 aa). 2 consecutive repeat copies span residues 229–235 and 236–242. The segment covering 229 to 241 has biased composition (basic residues); sequence THRHAPPTHRHAP. Positions 229-242 are 2 X 7 AA tandem repeats of T-H-R-H-A-P-P; it reads THRHAPPTHRHAPP. Pro residues-rich tracts occupy residues 251-552 and 562-613; these read HLPP…PPHW and GQPP…PPPY. A 3 X approximate tandem repeats region spans residues 499–600; sequence PPTFSPPPPR…PTPTYGQPPS (102 aa).

Hydroxylated on proline residues in the S-P-P-P-P repeat. In terms of processing, O-glycosylated on hydroxyprolines. In terms of tissue distribution, expressed in the tip of the emerging lateral roots.

The protein resides in the secreted. The protein localises to the primary cell wall. Has a specialized structural function, possibly in the mechanical penetration of the cortex and epidermis of the main root. This chain is Extensin (HRGPNT3), found in Nicotiana tabacum (Common tobacco).